A 118-amino-acid polypeptide reads, in one-letter code: Small ribosomal subunit protein uS13 (118 aa).

The tract at residues 93 to 118 (RGLPVRGQRTKTNARTRKGPRKPIRK) is disordered.

The protein belongs to the universal ribosomal protein uS13 family. In terms of assembly, part of the 30S ribosomal subunit. Forms a loose heterodimer with protein S19. Forms two bridges to the 50S subunit in the 70S ribosome.

In terms of biological role, located at the top of the head of the 30S subunit, it contacts several helices of the 16S rRNA. In the 70S ribosome it contacts the 23S rRNA (bridge B1a) and protein L5 of the 50S subunit (bridge B1b), connecting the 2 subunits; these bridges are implicated in subunit movement. Contacts the tRNAs in the A and P-sites. This is Small ribosomal subunit protein uS13 from Azotobacter vinelandii (strain DJ / ATCC BAA-1303).